The sequence spans 137 residues: Large ribosomal subunit protein uL16 (137 aa).

Belongs to the universal ribosomal protein uL16 family. Part of the 50S ribosomal subunit.

Binds 23S rRNA and is also seen to make contacts with the A and possibly P site tRNAs. This is Large ribosomal subunit protein uL16 from Rhizobium johnstonii (strain DSM 114642 / LMG 32736 / 3841) (Rhizobium leguminosarum bv. viciae).